Reading from the N-terminus, the 205-residue chain is TATA-box-binding protein (205 aa).

2 repeat units span residues leucine 27 to isoleucine 103 and isoleucine 117 to leucine 194.

The protein belongs to the TBP family. Belongs to the TFIID complex together with the TBP-associated factors (TAFs). Binds DNA as monomer.

It is found in the nucleus. Its function is as follows. General transcription factor that functions at the core of the DNA-binding multiprotein factor TFIID. Binding of TFIID to the TATA box is the initial transcriptional step of the pre-initiation complex (PIC), playing a role in the activation of eukaryotic genes transcribed by RNA polymerase II. The polypeptide is TATA-box-binding protein (tbpA) (Dictyostelium discoideum (Social amoeba)).